Reading from the N-terminus, the 165-residue chain is Large ribosomal subunit protein uL10 (165 aa).

This sequence belongs to the universal ribosomal protein uL10 family. Part of the ribosomal stalk of the 50S ribosomal subunit. The N-terminus interacts with L11 and the large rRNA to form the base of the stalk. The C-terminus forms an elongated spine to which L12 dimers bind in a sequential fashion forming a multimeric L10(L12)X complex.

Functionally, forms part of the ribosomal stalk, playing a central role in the interaction of the ribosome with GTP-bound translation factors. The protein is Large ribosomal subunit protein uL10 of Burkholderia cenocepacia (strain HI2424).